An 837-amino-acid chain; its full sequence is Tuftelin-interacting protein 11 (837 aa).

Basic and acidic residues-rich tracts occupy residues 1–13 (MSLSHLYRDGEGR) and 53–64 (VWAERDSDDERP). 3 disordered regions span residues 1–21 (MSLSHLYRDGEGRIDDDDDER), 53–72 (VWAERDSDDERPSFGGKRAR), and 85–133 (LKKG…KGFA). S2, S59, and S98 each carry phosphoserine. Over residues 91–102 (EEAELEDSDDEE) the composition is skewed to acidic residues. The segment covering 103–116 (RPVKQDDFPKDFGP) has biased composition (basic and acidic residues). Phosphoserine is present on S144. Residues 149–195 (TKGIGQKLLQKMGYVPGRGLGKNAQGIINPIEAKQRKGKGAVGAYGS) form the G-patch domain. Residues 179–236 (IEAKQRKGKGAVGAYGSERTTQSMQDFPVVDSEEEAEEEFQKGLSQWRKDPSGSKKKP) form a disordered region. S210 bears the Phosphoserine mark. The Nuclear localization signal motif lies at 700-705 (VKDKFN). Positions 710–734 (IMNRAVSSNVGAYMQPGARENIAYL) are required for nuclear speckle localization.

It belongs to the TFP11/STIP family. As to quaternary structure, identified in the spliceosome C complex. Found in the Intron Large (IL) complex, a post-mRNA release spliceosomal complex containing the excised intron, U2, U5 and U6 snRNPs, and splicing factors. Interacts with TUFT1. Interacts with DHX15; indicative for a recruitment of DHX15 to the IL complex. Interacts with GCFC2.

It localises to the cytoplasm. The protein resides in the nucleus. In terms of biological role, involved in pre-mRNA splicing, specifically in spliceosome disassembly during late-stage splicing events. Intron turnover seems to proceed through reactions in two lariat-intron associated complexes termed Intron Large (IL) and Intron Small (IS). In cooperation with DHX15 seems to mediate the transition of the U2, U5 and U6 snRNP-containing IL complex to the snRNP-free IS complex leading to efficient debranching and turnover of excised introns. May play a role in the differentiation of ameloblasts and odontoblasts or in the forming of the enamel extracellular matrix. This is Tuftelin-interacting protein 11 (TFIP11) from Macaca fascicularis (Crab-eating macaque).